We begin with the raw amino-acid sequence, 51 residues long: MKEQNSFNLLQEVTESELDLILGAKGGSGVIHTISHECNMNSWQFVFTCCS.

The propeptide occupies 1–24 (MKEQNSFNLLQEVTESELDLILGA). A cross-link (beta-methyllanthionine (Thr-Cys)) is located at residues 33–38 (TISHEC). Cross-links (lanthionine (Ser-Cys)) lie at residues 35 to 49 (SHECNMNSWQFVFTC) and 42 to 50 (SWQFVFTCC). Thr-48 carries the (Z)-2,3-didehydrobutyrine modification.

The protein belongs to the type A lantibiotic family. Monomer or homodimer. Maturation of lantibiotics involves the enzymatic conversion of Thr, and Ser into dehydrated AA and the formation of thioether bonds with cysteine. This is followed by membrane translocation and cleavage of the modified precursor. Post-translationally, it is established that the 2,3-didehydrobutyrine is the Z-isomer.

Lanthionine-containing peptide antibiotic (lantibiotic) active on Gram-positive bacteria. The bactericidal activity of lantibiotics is based on depolarization of energized bacterial cytoplasmic membranes, initiated by the formation of aqueous transmembrane pores. Lacticin 481 is a broad spectrum bacteriocin exhibiting activity against a wide range of lactic acid bacteria and C.tyrobutyricum. The sequence is that of Lantibiotic lacticin-481 (lctA) from Lactococcus lactis subsp. lactis (Streptococcus lactis).